A 39-amino-acid chain; its full sequence is Antimicrobial peptide CHP1 (39 aa).

Disulfide bonds link Cys-6-Cys-28, Cys-13-Cys-34, and Cys-18-Cys-35.

Its function is as follows. Bactericidal activity; inhibits S.aureus and E.coli. This is Antimicrobial peptide CHP1 from Gallus gallus (Chicken).